Reading from the N-terminus, the 214-residue chain is uncharacterized protein (214 aa).

A helical transmembrane segment spans residues 10–30 (LLLAGIGGFMVGGLASWVVSS). A compositionally biased stretch (polar residues) spans 147-157 (SSQANSQSTQP). The interval 147-166 (SSQANSQSTQPRDPIPTENF) is disordered.

The protein resides in the membrane. This is an uncharacterized protein from Schizosaccharomyces pombe (strain 972 / ATCC 24843) (Fission yeast).